The primary structure comprises 1141 residues: Myosin-binding protein C, slow-type (1141 aa).

Basic and acidic residues predominate over residues 1-10; sequence MPEPTKKEEN. The segment at 1–51 is disordered; that stretch reads MPEPTKKEENEVPAPAPPPEEPSKEKEAGTTPAKDWTLVETPPGEEQAKQN. Ig-like C2-type domains follow at residues 72–144, 251–340, 341–431, 432–520, and 522–619; these read GEDI…RCEV, SAAF…VREP, PIMV…VDLK, PLKI…HVID, and PKII…VVDF. At threonine 406 the chain carries Phosphothreonine. The residue at position 611 (serine 611) is a Phosphoserine. 2 consecutive Fibronectin type-III domains span residues 622-721 and 722-833; these read PPVA…TSPP and TLLT…VKEI. Threonine 798 carries the post-translational modification Phosphothreonine. A Phosphotyrosine modification is found at tyrosine 823. In terms of domain architecture, Ig-like C2-type 6 spans 837 to 931; the sequence is PKIRIPRHLK…ASIDIQIIDR (95 aa). Residues 934-1029 form the Fibronectin type-III 3 domain; the sequence is PPQIVKIEDV…TKESAVIARD (96 aa). In terms of domain architecture, Ig-like C2-type 7 spans 1047–1141; the sequence is PMFTQPLVNT…CKLEVKVIAQ (95 aa).

The protein belongs to the immunoglobulin superfamily. MyBP family. Interacts with USP25 (isoform USP25m only); the interaction prevents proteasomal degradation of MYBPC1.

Functionally, thick filament-associated protein located in the crossbridge region of vertebrate striated muscle a bands. Slow skeletal protein that binds to both myosin and actin. In vitro, binds to native thin filaments and modifies the activity of actin-activated myosin ATPase. May modulate muscle contraction or may play a more structural role. This Homo sapiens (Human) protein is Myosin-binding protein C, slow-type (MYBPC1).